The sequence spans 275 residues: AA9 family lytic polysaccharide monooxygenase AA9-X282 (275 aa).

The signal sequence occupies residues 1-17 (MFTKLIIAASLAASVAA). His18 contacts Cu(2+). Thr20 carries the post-translational modification Phosphothreonine. A phosphoserine mark is found at Ser43 and Ser49. At Thr50 the chain carries Phosphothreonine. Ser58 carries the phosphoserine modification. Cysteines 66 and 185 form a disulfide. Position 96 (His96) interacts with Cu(2+). A Phosphoserine modification is found at Ser130. Positions 171 and 180 each coordinate O2. Cu(2+) is bound at residue Tyr182. The X282 extension stretch occupies residues 236 to 265 (TSPAVANTPYPTTATWNTALQPSTVPTAVP). A 9res motif motif is present at residues 268–275 (GTPGIGKA).

The protein belongs to the polysaccharide monooxygenase AA9 family. It depends on Cu(2+) as a cofactor.

The protein resides in the secreted. It carries out the reaction [(1-&gt;4)-beta-D-glucosyl]n+m + reduced acceptor + O2 = 4-dehydro-beta-D-glucosyl-[(1-&gt;4)-beta-D-glucosyl]n-1 + [(1-&gt;4)-beta-D-glucosyl]m + acceptor + H2O.. In terms of biological role, lytic polysaccharide monooxygenase (LPMO) that depolymerizes crystalline and amorphous polysaccharides via the oxidation of scissile alpha- or beta-(1-4)-glycosidic bonds, yielding C1 oxidation products. Catalysis by LPMOs requires the reduction of the active-site copper from Cu(II) to Cu(I) by a reducing agent and H(2)O(2) or O(2) as a cosubstrate. Shows only weak binding properties to cellulose, and low cellulolytic oxidative activity which questions the involvement of X282 extension-containing AA9 proteins in the degradation of plant cell wall and opens new avenues as to the divergence of function of some AA9 members. The sequence is that of AA9 family lytic polysaccharide monooxygenase AA9-X282 from Trametes coccinea (strain BRFM310) (Pycnoporus coccineus).